Reading from the N-terminus, the 293-residue chain is Phosphate import ATP-binding protein PstB (293 aa).

Residues 46–288 (MTCRKVDVHY…PGHQLTEDYI (243 aa)) enclose the ABC transporter domain. ATP is bound at residue 78-85 (GPSGCGKS).

The protein belongs to the ABC transporter superfamily. Phosphate importer (TC 3.A.1.7) family. In terms of assembly, the complex is composed of two ATP-binding proteins (PstB), two transmembrane proteins (PstC and PstA) and a solute-binding protein (PstS).

It is found in the cell inner membrane. The enzyme catalyses phosphate(out) + ATP + H2O = ADP + 2 phosphate(in) + H(+). Its function is as follows. Part of the ABC transporter complex PstSACB involved in phosphate import. Responsible for energy coupling to the transport system. The sequence is that of Phosphate import ATP-binding protein PstB from Desulfotalea psychrophila (strain LSv54 / DSM 12343).